A 156-amino-acid chain; its full sequence is Superoxide dismutase [Cu-Zn] 2 (156 aa).

Cu cation contacts are provided by His47, His49, and His64. A disulfide bridge connects residues Cys58 and Cys147. The Zn(2+) site is built by His64, His72, His81, and Asp84. Residue His121 coordinates Cu cation.

It belongs to the Cu-Zn superoxide dismutase family. Homodimer. Requires Cu cation as cofactor. Zn(2+) is required as a cofactor.

Its subcellular location is the cytoplasm. The catalysed reaction is 2 superoxide + 2 H(+) = H2O2 + O2. Functionally, destroys radicals which are normally produced within the cells and which are toxic to biological systems. The sequence is that of Superoxide dismutase [Cu-Zn] 2 (SODCC.2) from Mesembryanthemum crystallinum (Common ice plant).